The sequence spans 540 residues: 2-isopropylmalate synthase (540 aa).

Positions 8–269 (VLIFDTTLRD…YFNPFFGREP (262 aa)) constitute a Pyruvate carboxyltransferase domain. Mn(2+) contacts are provided by aspartate 17, histidine 208, histidine 210, and asparagine 244. The segment at 408-540 (QLRLVQVSCG…AVLADLRSGI (133 aa)) is regulatory domain.

It belongs to the alpha-IPM synthase/homocitrate synthase family. LeuA type 1 subfamily. In terms of assembly, homodimer. Mn(2+) is required as a cofactor.

Its subcellular location is the cytoplasm. It carries out the reaction 3-methyl-2-oxobutanoate + acetyl-CoA + H2O = (2S)-2-isopropylmalate + CoA + H(+). It functions in the pathway amino-acid biosynthesis; L-leucine biosynthesis; L-leucine from 3-methyl-2-oxobutanoate: step 1/4. Catalyzes the condensation of the acetyl group of acetyl-CoA with 3-methyl-2-oxobutanoate (2-ketoisovalerate) to form 3-carboxy-3-hydroxy-4-methylpentanoate (2-isopropylmalate). This Prochlorococcus marinus (strain MIT 9313) protein is 2-isopropylmalate synthase.